Consider the following 76-residue polypeptide: Acyl carrier protein (76 aa).

The Carrier domain occupies 1–75 (MVLEKIKTLM…DVVLYIEKNL (75 aa)). Ser-35 carries the post-translational modification O-(pantetheine 4'-phosphoryl)serine.

Belongs to the acyl carrier protein (ACP) family. Post-translationally, 4'-phosphopantetheine is transferred from CoA to a specific serine of apo-ACP by AcpS. This modification is essential for activity because fatty acids are bound in thioester linkage to the sulfhydryl of the prosthetic group.

It localises to the cytoplasm. It participates in lipid metabolism; fatty acid biosynthesis. Carrier of the growing fatty acid chain in fatty acid biosynthesis. The polypeptide is Acyl carrier protein (Phytoplasma australiense).